Consider the following 68-residue polypeptide: Small ribosomal subunit protein bS21 (68 aa).

The protein belongs to the bacterial ribosomal protein bS21 family.

This is Small ribosomal subunit protein bS21 from Jannaschia sp. (strain CCS1).